Consider the following 214-residue polypeptide: Imidazole glycerol phosphate synthase subunit HisH 2 (214 aa).

The 209-residue stretch at 2 to 210 (KIVIIDYDMG…LDWVKIQKLG (209 aa)) folds into the Glutamine amidotransferase type-1 domain. C82 serves as the catalytic Nucleophile. Active-site residues include H185 and E187.

As to quaternary structure, heterodimer of HisH and HisF.

The protein localises to the cytoplasm. It carries out the reaction 5-[(5-phospho-1-deoxy-D-ribulos-1-ylimino)methylamino]-1-(5-phospho-beta-D-ribosyl)imidazole-4-carboxamide + L-glutamine = D-erythro-1-(imidazol-4-yl)glycerol 3-phosphate + 5-amino-1-(5-phospho-beta-D-ribosyl)imidazole-4-carboxamide + L-glutamate + H(+). The enzyme catalyses L-glutamine + H2O = L-glutamate + NH4(+). It participates in amino-acid biosynthesis; L-histidine biosynthesis; L-histidine from 5-phospho-alpha-D-ribose 1-diphosphate: step 5/9. IGPS catalyzes the conversion of PRFAR and glutamine to IGP, AICAR and glutamate. The HisH subunit provides the glutamine amidotransferase activity that produces the ammonia necessary to HisF for the synthesis of IGP and AICAR. In Vibrio vulnificus (strain YJ016), this protein is Imidazole glycerol phosphate synthase subunit HisH 2 (hisH2).